Here is a 454-residue protein sequence, read N- to C-terminus: Bifunctional protein GlmU (454 aa).

The tract at residues 1-225 (MNIVILAAGM…VWETLGVNSK (225 aa)) is pyrophosphorylase. UDP-N-acetyl-alpha-D-glucosamine-binding positions include 6–9 (LAAG), K20, Q71, 76–77 (GT), 98–100 (YGD), G135, E150, N165, and N223. D100 serves as a coordination point for Mg(2+). N223 serves as a coordination point for Mg(2+). The interval 226-246 (LQLAEVERIHQGNQARRLLEA) is linker. The segment at 247-454 (GVTLLDPARI…WQRPVKQPKQ (208 aa)) is N-acetyltransferase. The UDP-N-acetyl-alpha-D-glucosamine site is built by R329 and K347. Residue H359 is the Proton acceptor of the active site. UDP-N-acetyl-alpha-D-glucosamine-binding residues include Y362 and N373. Residues A376, 382-383 (NY), S401, A419, and R436 contribute to the acetyl-CoA site.

The protein in the N-terminal section; belongs to the N-acetylglucosamine-1-phosphate uridyltransferase family. It in the C-terminal section; belongs to the transferase hexapeptide repeat family. As to quaternary structure, homotrimer. Requires Mg(2+) as cofactor.

It localises to the cytoplasm. The enzyme catalyses alpha-D-glucosamine 1-phosphate + acetyl-CoA = N-acetyl-alpha-D-glucosamine 1-phosphate + CoA + H(+). It carries out the reaction N-acetyl-alpha-D-glucosamine 1-phosphate + UTP + H(+) = UDP-N-acetyl-alpha-D-glucosamine + diphosphate. It functions in the pathway nucleotide-sugar biosynthesis; UDP-N-acetyl-alpha-D-glucosamine biosynthesis; N-acetyl-alpha-D-glucosamine 1-phosphate from alpha-D-glucosamine 6-phosphate (route II): step 2/2. The protein operates within nucleotide-sugar biosynthesis; UDP-N-acetyl-alpha-D-glucosamine biosynthesis; UDP-N-acetyl-alpha-D-glucosamine from N-acetyl-alpha-D-glucosamine 1-phosphate: step 1/1. Its pathway is bacterial outer membrane biogenesis; LPS lipid A biosynthesis. Its function is as follows. Catalyzes the last two sequential reactions in the de novo biosynthetic pathway for UDP-N-acetylglucosamine (UDP-GlcNAc). The C-terminal domain catalyzes the transfer of acetyl group from acetyl coenzyme A to glucosamine-1-phosphate (GlcN-1-P) to produce N-acetylglucosamine-1-phosphate (GlcNAc-1-P), which is converted into UDP-GlcNAc by the transfer of uridine 5-monophosphate (from uridine 5-triphosphate), a reaction catalyzed by the N-terminal domain. The chain is Bifunctional protein GlmU from Cupriavidus taiwanensis (strain DSM 17343 / BCRC 17206 / CCUG 44338 / CIP 107171 / LMG 19424 / R1) (Ralstonia taiwanensis (strain LMG 19424)).